A 376-amino-acid chain; its full sequence is Putative endoglucanase type K (376 aa).

Residues 1 to 18 (MRSYTLLALAGPLAVSAA) form the signal peptide. The catalytic stretch occupies residues 19–308 (SGSGHSTRYW…ATKPAQPVNK (290 aa)). Asp29 functions as the Nucleophile in the catalytic mechanism. The Proton donor role is filled by Asp140. A disordered region spans residues 229–332 (AFKGDTSASK…SCPAKTDATA (104 aa)). Composition is skewed to low complexity over residues 235–258 (SASKPQPSSSAKKTTSAAAAAQPQ) and 291–306 (KPVATKPAATKPAQPV). Residues 309 to 338 (PKTTQKVRGTKTRGSCPAKTDATAKASVVP) are linker. The CBM1 domain maps to 335–374 (SVVPAYYQCGGSKSAYPNGNLACATGSKCVKQNEYYSQCV).

Belongs to the glycosyl hydrolase 45 (cellulase K) family.

The catalysed reaction is Endohydrolysis of (1-&gt;4)-beta-D-glucosidic linkages in cellulose, lichenin and cereal beta-D-glucans.. The polypeptide is Putative endoglucanase type K (Fusarium oxysporum (Fusarium vascular wilt)).